The primary structure comprises 104 residues: Large ribosomal subunit protein bL21 (104 aa).

It belongs to the bacterial ribosomal protein bL21 family. In terms of assembly, part of the 50S ribosomal subunit. Contacts protein L20.

In terms of biological role, this protein binds to 23S rRNA in the presence of protein L20. The polypeptide is Large ribosomal subunit protein bL21 (Streptococcus sanguinis (strain SK36)).